We begin with the raw amino-acid sequence, 124 residues long: MATVNQLVRKPRARKVAKSNVPALEACPQKRGVCTRVYTTTPKKPNSALRKVCRVRLTNGFEVTSYIGGEGHNLQEHSVILIRGGRVKDLPGVRYHTVRGALDCSGVKDRKQARSKYGVKRPKA.

The residue at position 89 (D89) is a 3-methylthioaspartic acid. Position 108 is an N6-acetyllysine (K108).

The protein belongs to the universal ribosomal protein uS12 family. As to quaternary structure, part of the 30S ribosomal subunit. Contacts proteins S8 and S17. May interact with IF1 in the 30S initiation complex.

With S4 and S5 plays an important role in translational accuracy. In terms of biological role, interacts with and stabilizes bases of the 16S rRNA that are involved in tRNA selection in the A site and with the mRNA backbone. Located at the interface of the 30S and 50S subunits, it traverses the body of the 30S subunit contacting proteins on the other side and probably holding the rRNA structure together. The combined cluster of proteins S8, S12 and S17 appears to hold together the shoulder and platform of the 30S subunit. The chain is Small ribosomal subunit protein uS12 from Escherichia coli O139:H28 (strain E24377A / ETEC).